Here is an 870-residue protein sequence, read N- to C-terminus: Leucine--tRNA ligase (870 aa).

A 'HIGH' region motif is present at residues 42-52; it reads PYPSGKLHMGH. A 'KMSKS' region motif is present at residues 629-633; that stretch reads KMSKS. K632 is a binding site for ATP.

The protein belongs to the class-I aminoacyl-tRNA synthetase family.

The protein localises to the cytoplasm. It catalyses the reaction tRNA(Leu) + L-leucine + ATP = L-leucyl-tRNA(Leu) + AMP + diphosphate. In Azotobacter vinelandii (strain DJ / ATCC BAA-1303), this protein is Leucine--tRNA ligase.